The chain runs to 251 residues: Octanoyltransferase (251 aa).

Residues 29-216 (GVIQDTLLLL…NFGFIFKEQV (188 aa)) enclose the BPL/LPL catalytic domain. Residues 74–81 (RGGDVTFH), 146–148 (AIG), and 159–161 (GFA) each bind substrate. The active-site Acyl-thioester intermediate is the cysteine 177.

The protein belongs to the LipB family.

It localises to the cytoplasm. It catalyses the reaction octanoyl-[ACP] + L-lysyl-[protein] = N(6)-octanoyl-L-lysyl-[protein] + holo-[ACP] + H(+). Its pathway is protein modification; protein lipoylation via endogenous pathway; protein N(6)-(lipoyl)lysine from octanoyl-[acyl-carrier-protein]: step 1/2. In terms of biological role, catalyzes the transfer of endogenously produced octanoic acid from octanoyl-acyl-carrier-protein onto the lipoyl domains of lipoate-dependent enzymes. Lipoyl-ACP can also act as a substrate although octanoyl-ACP is likely to be the physiological substrate. This chain is Octanoyltransferase, found in Koribacter versatilis (strain Ellin345).